Here is a 335-residue protein sequence, read N- to C-terminus: Holliday junction branch migration complex subunit RuvB (335 aa).

The tract at residues 1–181 (MDRIVEIEKY…FGMQFRLEFY (181 aa)) is large ATPase domain (RuvB-L). Residues Leu-20, Arg-21, Gly-62, Lys-65, Thr-66, Thr-67, 128 to 130 (EDY), Arg-171, Tyr-181, and Arg-218 contribute to the ATP site. Residue Thr-66 participates in Mg(2+) binding. The interval 182 to 252 (KDSELALILQ…RANEALNSLG (71 aa)) is small ATPAse domain (RuvB-S). The interval 255-335 (ELGFDAMDLR…LNYEKTLFEE (81 aa)) is head domain (RuvB-H). Arg-309 and Arg-314 together coordinate DNA.

It belongs to the RuvB family. As to quaternary structure, homohexamer. Forms an RuvA(8)-RuvB(12)-Holliday junction (HJ) complex. HJ DNA is sandwiched between 2 RuvA tetramers; dsDNA enters through RuvA and exits via RuvB. An RuvB hexamer assembles on each DNA strand where it exits the tetramer. Each RuvB hexamer is contacted by two RuvA subunits (via domain III) on 2 adjacent RuvB subunits; this complex drives branch migration. In the full resolvosome a probable DNA-RuvA(4)-RuvB(12)-RuvC(2) complex forms which resolves the HJ.

It localises to the cytoplasm. The catalysed reaction is ATP + H2O = ADP + phosphate + H(+). Functionally, the RuvA-RuvB-RuvC complex processes Holliday junction (HJ) DNA during genetic recombination and DNA repair, while the RuvA-RuvB complex plays an important role in the rescue of blocked DNA replication forks via replication fork reversal (RFR). RuvA specifically binds to HJ cruciform DNA, conferring on it an open structure. The RuvB hexamer acts as an ATP-dependent pump, pulling dsDNA into and through the RuvAB complex. RuvB forms 2 homohexamers on either side of HJ DNA bound by 1 or 2 RuvA tetramers; 4 subunits per hexamer contact DNA at a time. Coordinated motions by a converter formed by DNA-disengaged RuvB subunits stimulates ATP hydrolysis and nucleotide exchange. Immobilization of the converter enables RuvB to convert the ATP-contained energy into a lever motion, pulling 2 nucleotides of DNA out of the RuvA tetramer per ATP hydrolyzed, thus driving DNA branch migration. The RuvB motors rotate together with the DNA substrate, which together with the progressing nucleotide cycle form the mechanistic basis for DNA recombination by continuous HJ branch migration. Branch migration allows RuvC to scan DNA until it finds its consensus sequence, where it cleaves and resolves cruciform DNA. The polypeptide is Holliday junction branch migration complex subunit RuvB (Campylobacter jejuni subsp. doylei (strain ATCC BAA-1458 / RM4099 / 269.97)).